Here is a 166-residue protein sequence, read N- to C-terminus: MAAGAMSSSTLAQIPNVYQVIDPLAIDTSSTSTKRLLDEPVPHIGSITSRSYLLRVKCSSPEDCHAFFFGLATEASGNMSQHGAEYIARSMNEKLYTGRSADELCHTPFSHATILDSLDDNYTLNIEGLCYHCHCENKFSHECWKAAFIAGEKMALLCKDLRMYCH.

It belongs to the alphaherpesvirinae HHV-1 UL55 family.

The protein resides in the virion tegument. It is found in the host nucleus matrix. This chain is Tegument protein UL55 homolog (MDV070), found in Gallid herpesvirus 2 (strain Chicken/Md5/ATCC VR-987) (GaHV-2).